We begin with the raw amino-acid sequence, 100 residues long: uncharacterized protein (100 aa).

Residues 62–82 traverse the membrane as a helical segment; it reads IPIVIIVSIFILLIIGSISLY.

The protein resides in the membrane. This is an uncharacterized protein from Dictyostelium discoideum (Social amoeba).